A 66-amino-acid chain; its full sequence is 14-3-3-like protein 2 (66 aa).

The protein belongs to the 14-3-3 family.

In Pseudotsuga menziesii (Douglas-fir), this protein is 14-3-3-like protein 2.